The following is a 145-amino-acid chain: D-aminoacyl-tRNA deacylase (145 aa).

A Gly-cisPro motif, important for rejection of L-amino acids motif is present at residues 137–138; the sequence is GP.

Belongs to the DTD family. As to quaternary structure, homodimer.

It is found in the cytoplasm. The enzyme catalyses glycyl-tRNA(Ala) + H2O = tRNA(Ala) + glycine + H(+). It carries out the reaction a D-aminoacyl-tRNA + H2O = a tRNA + a D-alpha-amino acid + H(+). In terms of biological role, an aminoacyl-tRNA editing enzyme that deacylates mischarged D-aminoacyl-tRNAs. Also deacylates mischarged glycyl-tRNA(Ala), protecting cells against glycine mischarging by AlaRS. Acts via tRNA-based rather than protein-based catalysis; rejects L-amino acids rather than detecting D-amino acids in the active site. By recycling D-aminoacyl-tRNA to D-amino acids and free tRNA molecules, this enzyme counteracts the toxicity associated with the formation of D-aminoacyl-tRNA entities in vivo and helps enforce protein L-homochirality. The polypeptide is D-aminoacyl-tRNA deacylase (Salmonella paratyphi A (strain AKU_12601)).